We begin with the raw amino-acid sequence, 320 residues long: MDSEASDIEAELSDSVSAGGEEYIDDDDYTEDIDDQIVTAKSSRRTARRSVPKGVRTSKRIRDKELSVEVDEDYDEEEDVLSPSKKRHLHTRSMDKRQVAATASEKSDIGDSKGNDGEIEDGILEEEESLEKELNRGGGKEVEKSEESYYAQNDVGQKGEEEQDGESGGYEDNEPSISKESDELVSVVNGNGNEEDDEVEATKENTTDSTRSTTTRSKMLLDLLEDGGSKKKLTDEEIQLRRAENARKRKNLSEKRLEEEKQDTINKLLKKRAGKSRSHLPNDDEKNDGSSSFVKPRRPYNSEGMTRILRRYEEDLFCTF.

Composition is skewed to acidic residues over residues 1–12 and 22–35; these read MDSEASDIEAEL and EYID…DIDD. Disordered regions lie at residues 1–232 and 244–306; these read MDSE…SKKK and ENAR…EGMT. The span at 42-59 shows a compositional bias: basic residues; that stretch reads SSRRTARRSVPKGVRTSK. Residue Ser-67 is modified to Phosphoserine. Positions 68–80 are enriched in acidic residues; that stretch reads VEVDEDYDEEEDV. Residues 105 to 116 are compositionally biased toward basic and acidic residues; sequence EKSDIGDSKGND. A compositionally biased stretch (acidic residues) spans 117–130; the sequence is GEIEDGILEEEESL. Ser-129 is modified (phosphoserine). A compositionally biased stretch (basic and acidic residues) spans 131–147; the sequence is EKELNRGGGKEVEKSEE. Over residues 161-174 the composition is skewed to acidic residues; the sequence is EEQDGESGGYEDNE. Residues 207-217 show a composition bias toward low complexity; the sequence is TDSTRSTTTRS. A compositionally biased stretch (basic and acidic residues) spans 244–264; sequence ENARKRKNLSEKRLEEEKQDT. Residues 268-278 are compositionally biased toward basic residues; it reads LLKKRAGKSRS.

It belongs to the IES2 family. In terms of assembly, component of the chromatin-remodeling INO80 complex, at least composed of ARP4, ARP5, ARP8, RVB1, RVB2, TAF14, NHP10, IES1, IES3, IES4, IES6, ACT1, IES2, IES5 and INO80.

It is found in the nucleus. Functionally, component of the INO80 complex which remodels chromatin by shifting nucleosomes and is involved in DNA repair. In Saccharomyces cerevisiae (strain ATCC 204508 / S288c) (Baker's yeast), this protein is Ino eighty subunit 2 (IES2).